The primary structure comprises 284 residues: Probable 3-mercaptopyruvate sulfurtransferase (284 aa).

2 consecutive Rhodanese domains span residues 17–138 (SEPD…ALTN) and 168–281 (GQPG…RPVA). Position 182 (R182) interacts with substrate. C241 serves as the catalytic Cysteine persulfide intermediate. Positions 241-247 (CGSGVTA) are substrate specificity.

It localises to the cytoplasm. It catalyses the reaction 2-oxo-3-sulfanylpropanoate + [thioredoxin]-dithiol = [thioredoxin]-disulfide + hydrogen sulfide + pyruvate + H(+). Functionally, catalyzes the transfer of sulfur from 3-mercaptopyruvate to a thiol-containing acceptor to form an intramolecular disulfide releasing hydrogen sulfide and pyruvate. This is Probable 3-mercaptopyruvate sulfurtransferase (sseA) from Pseudomonas aeruginosa (strain ATCC 15692 / DSM 22644 / CIP 104116 / JCM 14847 / LMG 12228 / 1C / PRS 101 / PAO1).